Here is a 393-residue protein sequence, read N- to C-terminus: Pinosylvin synthase (393 aa).

Position 57 to 60 (Lys57 to Arg60) interacts with substrate. Residue Cys167 is part of the active site. Substrate is bound by residues Leu270 and Gly308–Arg310.

The protein belongs to the thiolase-like superfamily. Chalcone/stilbene synthases family. As to quaternary structure, homodimer.

The protein localises to the cytoplasm. The enzyme catalyses (E)-cinnamoyl-CoA + 3 malonyl-CoA + 3 H(+) = (E)-pinosylvin + 4 CO2 + 4 CoA. The catalysed reaction is 3-phenylpropanoyl-CoA + 3 malonyl-CoA + 3 H(+) = dihydropinosylvin + 4 CO2 + 4 CoA. It participates in phytoalexin biosynthesis; hydropinosylvin biosynthesis. In terms of biological role, catalyzes the production of pinosylvin from cinnamoyl-CoA and malonyl-CoA, and dihydropinosylvin from dihydrocinnamoyl-CoA. The chain is Pinosylvin synthase from Pinus sylvestris (Scotch pine).